A 301-amino-acid polypeptide reads, in one-letter code: Glycine--tRNA ligase alpha subunit (301 aa).

The protein belongs to the class-II aminoacyl-tRNA synthetase family. Tetramer of two alpha and two beta subunits.

It is found in the cytoplasm. The enzyme catalyses tRNA(Gly) + glycine + ATP = glycyl-tRNA(Gly) + AMP + diphosphate. The sequence is that of Glycine--tRNA ligase alpha subunit from Shewanella frigidimarina (strain NCIMB 400).